The following is a 359-amino-acid chain: DNA polymerase IV (359 aa).

Residues 4–185 form the UmuC domain; it reads IIHVDMDCFF…LALIKIPGVG (182 aa). Aspartate 8 and aspartate 103 together coordinate Mg(2+). Glutamate 104 is an active-site residue.

It belongs to the DNA polymerase type-Y family. As to quaternary structure, monomer. Mg(2+) serves as cofactor.

The protein localises to the cytoplasm. The catalysed reaction is DNA(n) + a 2'-deoxyribonucleoside 5'-triphosphate = DNA(n+1) + diphosphate. In terms of biological role, poorly processive, error-prone DNA polymerase involved in untargeted mutagenesis. Copies undamaged DNA at stalled replication forks, which arise in vivo from mismatched or misaligned primer ends. These misaligned primers can be extended by PolIV. Exhibits no 3'-5' exonuclease (proofreading) activity. May be involved in translesional synthesis, in conjunction with the beta clamp from PolIII. This chain is DNA polymerase IV, found in Shewanella loihica (strain ATCC BAA-1088 / PV-4).